We begin with the raw amino-acid sequence, 1304 residues long: Histone-lysine N-methyltransferase met-2 (1304 aa).

The segment covering 1 to 16 (MDQQEPSNNVDTSSIL) has biased composition (polar residues). The disordered stretch occupies residues 1–31 (MDQQEPSNNVDTSSILSDDGMETQEQSSFVT). Residues 97–129 (NESEQEAVAAQRRVDAEKTAKDEAELKQQEEAE) are a coiled coil. In terms of domain architecture, MBD spans 834–909 (FHRNSPIHTP…FSFDARIDTA (76 aa)). Residues 971–1049 (SGCSCDGDCS…SCYNRVVQNN (79 aa)) enclose the Pre-SET domain. Zn(2+)-binding residues include Cys973, Cys975, Cys979, Cys985, Cys987, Cys1030, Cys1034, Cys1036, and Cys1041. An SET domain is found at 1052–1277 (YPMHIFKTAQ…AGDELTWDYQ (226 aa)). Residues 1062-1064 (SGW), Asp1098, and Tyr1100 contribute to the S-adenosyl-L-methionine site. The segment covering 1113 to 1122 (EKGREDHETD) has biased composition (basic and acidic residues). Positions 1113-1201 (EKGREDHETD…DSMEKDNIES (89 aa)) are disordered. Residues 1128 to 1144 (DESDYDDEEGSDGDSGD) are compositionally biased toward acidic residues. The segment covering 1152–1165 (KRQDSSESGEETKR) has biased composition (basic and acidic residues). Basic residues predominate over residues 1166-1178 (LTRQKRKQSKKSG). Residues 1182–1201 (SVEKDDTTPRDSMEKDNIES) show a composition bias toward basic and acidic residues. Residues Arg1231 and 1234 to 1235 (NH) contribute to the S-adenosyl-L-methionine site. Residues Cys1237, Cys1290, Cys1292, and Cys1297 each coordinate Zn(2+). The Post-SET domain occupies 1286 to 1302 (TQLTCHCGAENCTGRLL).

The protein belongs to the class V-like SAM-binding methyltransferase superfamily.

It localises to the nucleus. The protein localises to the chromosome. It is found in the cytoplasm. The enzyme catalyses N(6)-methyl-L-lysyl(9)-[histone H3] + S-adenosyl-L-methionine = N(6),N(6)-dimethyl-L-lysyl(9)-[histone H3] + S-adenosyl-L-homocysteine + H(+). It carries out the reaction L-lysyl(9)-[histone H3] + S-adenosyl-L-methionine = N(6)-methyl-L-lysyl(9)-[histone H3] + S-adenosyl-L-homocysteine + H(+). Functionally, histone methyltransferase which is required for the mono- and dimethylation of 'Lys-9' of histone H3. This increases the efficiency of set-25-mediated trimethylation of histone H3 'Lys-9'. Involved in the transcriptional repression of lin-3 which is required for the negative regulation of vulval cell fate specification during postembryonic development. Has a role in blocking checkpoint signaling and mediating the transcriptional silencing of meiotic sex chromosome inactivation; a mechanism which enables checkpoint proteins to distinguish between the partnerless male X chromosome and asynapsed chromosomes thereby shielding the lone X from inappropriate activation of an apoptotic program. Operates redundantly with set-25 to position chromatin at the nuclear periphery. Required for small-RNA-induced H3K9 methylation. Together with set-25, protects and stabilizes repeat-rich genomic regions by suppressing transcription-induced replication stress through methylation of H3K9. Together with spr-5, required for transgenerational fertility. This is Histone-lysine N-methyltransferase met-2 (met-2) from Caenorhabditis elegans.